We begin with the raw amino-acid sequence, 288 residues long: MKIAVMTDSTSYLSQDLIDKYNIQIAPLSVTFDDGKNFTESNEIAIEEFYNKMASSQTIPTTSQPAIGEWITKYEMLRDQGYTDIIVICLSSGISGSYQSSYQAGEMVEGVNVHAFDSKLAAMIEGCYVLRAIEMVEEGYEPQQIIDDLTNMREHTGAYLIVDDLKNLQKSGRITGAQAWVGTLLKMKPVLKFEDGKIIPEEKVRTKKRAIQTLEKKVLDIVKDFEEVTLFVINGDHFEDGQALYKKLQDDCPSAYQVAYSEFGPVVAAHLGSGGLGLGYVGRKIRLT.

Residues 3-282 (IAVMTDSTSY…SGGLGLGYVG (280 aa)) enclose the DegV domain. Hexadecanoate is bound by residues Thr-62 and Ser-95.

In terms of biological role, may bind long-chain fatty acids, such as palmitate, and may play a role in lipid transport or fatty acid metabolism. This is DegV domain-containing protein SAS0714 from Staphylococcus aureus (strain MSSA476).